The primary structure comprises 883 residues: Alanine--tRNA ligase (883 aa).

Residues H560, H564, C665, and H669 each contribute to the Zn(2+) site.

It belongs to the class-II aminoacyl-tRNA synthetase family. The cofactor is Zn(2+).

Its subcellular location is the cytoplasm. The catalysed reaction is tRNA(Ala) + L-alanine + ATP = L-alanyl-tRNA(Ala) + AMP + diphosphate. Functionally, catalyzes the attachment of alanine to tRNA(Ala) in a two-step reaction: alanine is first activated by ATP to form Ala-AMP and then transferred to the acceptor end of tRNA(Ala). Also edits incorrectly charged Ser-tRNA(Ala) and Gly-tRNA(Ala) via its editing domain. This Mesomycoplasma hyopneumoniae (strain J / ATCC 25934 / NCTC 10110) (Mycoplasma hyopneumoniae) protein is Alanine--tRNA ligase.